A 453-amino-acid polypeptide reads, in one-letter code: uncharacterized protein (453 aa).

At 1–110 (MIQTQSTAIK…KAILRTFNHP (110 aa)) the chain is on the cytoplasmic side. A helical membrane pass occupies residues 111-131 (IALTELQFLVSAVLCVGFASI). Residues 132-172 (VNLFRLPRLKHTKFSKALNSFPDGILPEYLDGNFRSSILHK) are Lumenal-facing. A helical transmembrane segment spans residues 173–193 (FLVPSKLVLMTTFPMGIFQFI). Residues 194 to 201 (GHITSHKA) are Cytoplasmic-facing. The helical transmembrane segment at 202-222 (VSMIPVSLVHSVKALSPIITV) threads the bilayer. Topologically, residues 223 to 234 (GYYKFFEHRYYN) are lumenal. The chain crosses the membrane as a helical span at residues 235-255 (SMTYYTLLLLIFGVMTTCWST). Residues 256–269 (HGSKRASDNKSGSS) are Cytoplasmic-facing. Residues 270 to 290 (LIGLLFAFISMIIFVAQNIFA) form a helical membrane-spanning segment. Topologically, residues 291-332 (KNILTIRRKVGILPSSSTDDVTSKEGQPSLDKTRFSPLQVDK) are lumenal. The helical transmembrane segment at 333-353 (ITILFYCSCIGFSLTLLPFLT) threads the bilayer. Topologically, residues 354–371 (GELMHGGSVINDLTLETV) are cytoplasmic. A helical membrane pass occupies residues 372-392 (ALVAIHGIAHFFQAMLAFQLI). Residues 393–413 (GLLSSINYSVANIMKRIVVIS) lie on the Lumenal side of the membrane. A helical transmembrane segment spans residues 414-434 (VALFWETKLNFFQVFGVILTI). Over 435–453 (AGLYGYDKWGLSKKDGRQA) the chain is Cytoplasmic.

Belongs to the TPT transporter family.

Its subcellular location is the membrane. In terms of biological role, able to suppress the functional loss of YPT1. May form a channel. Protein SLY41 is not essential for cell viability. The SLY41 gene is a multicopy suppressor. This is an uncharacterized protein from Saccharomyces cerevisiae (strain ATCC 204508 / S288c) (Baker's yeast).